The primary structure comprises 472 residues: H(+)/Cl(-) exchange transporter ClcA (472 aa).

The Cytoplasmic portion of the chain corresponds to 1–32 (MKAETPSFEAHQFVRVRRGDAVRRLIQRDKTP). A helical transmembrane segment spans residues 33 to 69 (LAVLLMAAVVGTLAGLVGVAFEKSVNWVQNQRIGALA). The Periplasmic segment spans residues 70–76 (QVADHWY). A helical membrane pass occupies residues 77–100 (LVWPLAFILSALLAMVGYFLVRRF). The Selectivity filter part_1 motif lies at 106–110 (GSGIP). A chloride-binding site is contributed by serine 107. Residues 109–116 (IPEIEGAL) constitute an intramembrane region (helical). Residues 117–123 (EELRPVR) are Cytoplasmic-facing. The next 2 helical transmembrane spans lie at 124-141 (WWRVLPVKFIGGMGTLGA) and 148-166 (EGPMVQLGGNIGRMVLDIF). Residues 146 to 150 (GREGP) carry the Selectivity filter part_2 motif. Over 167 to 176 (RMRSPEARHT) the chain is Cytoplasmic. Intramembrane regions (helical) lie at residues 177–189 (LLATGAASGLSAA) and 193–201 (PLAGILFII). The Cytoplasmic segment spans residues 202 to 214 (EEMRPQFRYNLIS). Residues 215 to 232 (IKAVFTGVIMSSIVFRIF) form a helical membrane-spanning segment. The Periplasmic segment spans residues 233 to 252 (NGEAAIIEVGKLSNAPVNTL). Residues 253–281 (WLYLVLGMLFGCFGPLFNFLVLRTQDIFQ) form a helical membrane-spanning segment. The Cytoplasmic portion of the chain corresponds to 282-287 (RIHGGN). Residues 288-309 (IKTWVLMGGVIGGICGLLGLMQ) form a helical membrane-spanning segment. Topologically, residues 310–329 (PSAVGGGFNLIPIAAAGNFS) are periplasmic. 2 helical membrane passes run 330–349 (VGLLLFIFIARVVTTLICFS) and 355–376 (GIFAPMLALGTLLGTAFGMAAI). The Selectivity filter part_3 motif lies at 355 to 359 (GIFAP). Chloride contacts are provided by isoleucine 356 and phenylalanine 357. The Periplasmic segment spans residues 377–386 (PLFPAYHLDA). Positions 387–401 (GTFAIAGMGALLAAS) form an intramembrane region, helical. The note=Loop between two helices intramembrane region spans 402–404 (VRA). Positions 405 to 416 (PLTGIVLVLEMT) form an intramembrane region, helical. Positions 417 to 421 (DNYQL) form an intramembrane region, note=Loop between two helices. A helical transmembrane segment spans residues 422-438 (ILPMIITCLGATLLAQF). At 439 to 472 (LGGKPLYSTILQRTLAKQEAEQAAKAQQAPRENT) the chain is on the cytoplasmic side. Position 445 (tyrosine 445) interacts with chloride.

This sequence belongs to the chloride channel (TC 2.A.49) family. ClcA subfamily. In terms of assembly, homodimer.

It is found in the cell inner membrane. The catalysed reaction is 2 chloride(in) + H(+)(out) = 2 chloride(out) + H(+)(in). Proton-coupled chloride transporter. Functions as antiport system and exchanges two chloride ions for 1 proton. Probably acts as an electrical shunt for an outwardly-directed proton pump that is linked to amino acid decarboxylation, as part of the extreme acid resistance (XAR) response. In Klebsiella pneumoniae (strain 342), this protein is H(+)/Cl(-) exchange transporter ClcA.